Consider the following 503-residue polypeptide: UDP-N-acetylmuramoyl-L-alanyl-D-glutamate--2,6-diaminopimelate ligase (503 aa).

S32 provides a ligand contact to UDP-N-acetyl-alpha-D-muramoyl-L-alanyl-D-glutamate. Position 117–123 (117–123) interacts with ATP; sequence GTNGKTT. UDP-N-acetyl-alpha-D-muramoyl-L-alanyl-D-glutamate contacts are provided by residues 159-160, S186, Q192, and R194; that span reads TT. The residue at position 226 (K226) is an N6-carboxylysine. Meso-2,6-diaminopimelate-binding positions include R396, 420-423, G471, and E475; that span reads DNPR. The Meso-diaminopimelate recognition motif motif lies at 420–423; it reads DNPR.

It belongs to the MurCDEF family. MurE subfamily. Requires Mg(2+) as cofactor. Post-translationally, carboxylation is probably crucial for Mg(2+) binding and, consequently, for the gamma-phosphate positioning of ATP.

Its subcellular location is the cytoplasm. It carries out the reaction UDP-N-acetyl-alpha-D-muramoyl-L-alanyl-D-glutamate + meso-2,6-diaminopimelate + ATP = UDP-N-acetyl-alpha-D-muramoyl-L-alanyl-gamma-D-glutamyl-meso-2,6-diaminopimelate + ADP + phosphate + H(+). It participates in cell wall biogenesis; peptidoglycan biosynthesis. Its function is as follows. Catalyzes the addition of meso-diaminopimelic acid to the nucleotide precursor UDP-N-acetylmuramoyl-L-alanyl-D-glutamate (UMAG) in the biosynthesis of bacterial cell-wall peptidoglycan. This Prochlorococcus marinus (strain SARG / CCMP1375 / SS120) protein is UDP-N-acetylmuramoyl-L-alanyl-D-glutamate--2,6-diaminopimelate ligase.